Reading from the N-terminus, the 166-residue chain is CDP-archaeol synthase (166 aa).

The next 4 helical transmembrane spans lie at 42–62 (LVLGILSGVLLGLIQVSVQDA), 73–93 (VLSVLLLAVGALAGDMVKSFV), 103–123 (AAWPLADQYDLVAGSLLLLLI), and 128–148 (FAAVNLTIPVIFWILVLTPLL).

It belongs to the CDP-archaeol synthase family. Mg(2+) serves as cofactor.

The protein localises to the cell membrane. It carries out the reaction 2,3-bis-O-(geranylgeranyl)-sn-glycerol 1-phosphate + CTP + H(+) = CDP-2,3-bis-O-(geranylgeranyl)-sn-glycerol + diphosphate. It participates in membrane lipid metabolism; glycerophospholipid metabolism. In terms of biological role, catalyzes the formation of CDP-2,3-bis-(O-geranylgeranyl)-sn-glycerol (CDP-archaeol) from 2,3-bis-(O-geranylgeranyl)-sn-glycerol 1-phosphate (DGGGP) and CTP. This reaction is the third ether-bond-formation step in the biosynthesis of archaeal membrane lipids. This chain is CDP-archaeol synthase, found in Methanosphaerula palustris (strain ATCC BAA-1556 / DSM 19958 / E1-9c).